Here is a 91-residue protein sequence, read N- to C-terminus: Small ribosomal subunit protein uS19 (91 aa).

Residues 72–91 (GEFSPTRKFGGHGDDKKKKK) form a disordered region. The segment covering 82-91 (GHGDDKKKKK) has biased composition (basic and acidic residues).

This sequence belongs to the universal ribosomal protein uS19 family.

Protein S19 forms a complex with S13 that binds strongly to the 16S ribosomal RNA. The polypeptide is Small ribosomal subunit protein uS19 (Spiroplasma kunkelii).